Here is a 25-residue protein sequence, read N- to C-terminus: Antimicrobial peptide scolopin-2 (25 aa).

In terms of tissue distribution, expressed by the venom gland.

The protein localises to the secreted. In terms of biological role, antimicrobial peptide against both Gram-positive, -negative and yeast. Also induces histamine release by mast cells and shows moderate hemolytic activities against both human and rabbit red cells. This is Antimicrobial peptide scolopin-2 from Scolopendra mutilans (Chinese red-headed centipede).